The chain runs to 433 residues: C2H2 type master regulator of conidiophore development brlA (433 aa).

Disordered regions lie at residues 23-54 (PSECPSMTSSFSPLDSPTPTPTSLYSQGSMAS) and 238-268 (TFKSHTPSTPHRSVSMGTPSGSDTPVSRMSG). The segment covering 30 to 48 (TSSFSPLDSPTPTPTSLYS) has biased composition (low complexity). The segment covering 238-264 (TFKSHTPSTPHRSVSMGTPSGSDTPVS) has biased composition (polar residues). 2 C2H2-type zinc fingers span residues 321 to 345 (FKCKEPGCKGRFKRQEHLKRHMKSH) and 351 to 376 (HVCWVPGCHRAFSRSDNLNAHYTKTH). The tract at residues 391–423 (ETSQDFDPDFRGQLTPDGRPIYGSKLEDSMPDC) is disordered.

The protein resides in the nucleus. Functionally, brlA, abaA and wetA are pivotal regulators of conidiophore development and conidium maturation. They act individually and together to regulate their own expression and that of numerous other sporulation-specific genes. Binds promoters of target genes at brlA response elements (BREs) containing the conserved sequence 5'-(C/A)(A/G)AGGG(G/A)-3'. In Penicillium camemberti (strain FM 013), this protein is C2H2 type master regulator of conidiophore development brlA.